A 92-amino-acid polypeptide reads, in one-letter code: Protein canopy homolog 1 (92 aa).

The protein belongs to the canopy family.

This is Protein canopy homolog 1 (CNPY1) from Homo sapiens (Human).